A 392-amino-acid polypeptide reads, in one-letter code: CCA-adding enzyme (392 aa).

2 residues coordinate ATP: S45 and K48. Residues S45 and K48 each coordinate CTP. Residues D55, D57, and E106 each coordinate Mg(2+). 3 residues coordinate ATP: H129, K148, and Y157. Residues H129, K148, and Y157 each contribute to the CTP site.

Belongs to the tRNA nucleotidyltransferase/poly(A) polymerase family. Archaeal CCA-adding enzyme subfamily. Homodimer. The cofactor is Mg(2+).

It carries out the reaction a tRNA precursor + 2 CTP + ATP = a tRNA with a 3' CCA end + 3 diphosphate. The enzyme catalyses a tRNA with a 3' CCA end + 2 CTP + ATP = a tRNA with a 3' CCACCA end + 3 diphosphate. Its function is as follows. Catalyzes the addition and repair of the essential 3'-terminal CCA sequence in tRNAs without using a nucleic acid template. Adds these three nucleotides in the order of C, C, and A to the tRNA nucleotide-73, using CTP and ATP as substrates and producing inorganic pyrophosphate. tRNA 3'-terminal CCA addition is required both for tRNA processing and repair. Also involved in tRNA surveillance by mediating tandem CCA addition to generate a CCACCA at the 3' terminus of unstable tRNAs. While stable tRNAs receive only 3'-terminal CCA, unstable tRNAs are marked with CCACCA and rapidly degraded. This chain is CCA-adding enzyme, found in Nanoarchaeum equitans (strain Kin4-M).